A 253-amino-acid polypeptide reads, in one-letter code: Imidazole glycerol phosphate synthase subunit HisF (253 aa).

Catalysis depends on residues aspartate 11 and aspartate 130.

It belongs to the HisA/HisF family. As to quaternary structure, heterodimer of HisH and HisF.

It is found in the cytoplasm. The catalysed reaction is 5-[(5-phospho-1-deoxy-D-ribulos-1-ylimino)methylamino]-1-(5-phospho-beta-D-ribosyl)imidazole-4-carboxamide + L-glutamine = D-erythro-1-(imidazol-4-yl)glycerol 3-phosphate + 5-amino-1-(5-phospho-beta-D-ribosyl)imidazole-4-carboxamide + L-glutamate + H(+). Its pathway is amino-acid biosynthesis; L-histidine biosynthesis; L-histidine from 5-phospho-alpha-D-ribose 1-diphosphate: step 5/9. Its function is as follows. IGPS catalyzes the conversion of PRFAR and glutamine to IGP, AICAR and glutamate. The HisF subunit catalyzes the cyclization activity that produces IGP and AICAR from PRFAR using the ammonia provided by the HisH subunit. In Thermoanaerobacter sp. (strain X514), this protein is Imidazole glycerol phosphate synthase subunit HisF.